The following is a 311-amino-acid chain: Ribonuclease HIII (311 aa).

One can recognise an RNase H type-2 domain in the interval 93–310 (LSAIGSDEVG…TKKALDIAKH (218 aa)). Residues aspartate 99, glutamate 100, and aspartate 204 each contribute to the a divalent metal cation site.

Belongs to the RNase HII family. RnhC subfamily. Requires Mn(2+) as cofactor. The cofactor is Mg(2+).

The protein resides in the cytoplasm. The enzyme catalyses Endonucleolytic cleavage to 5'-phosphomonoester.. In terms of biological role, endonuclease that specifically degrades the RNA of RNA-DNA hybrids. This Geobacillus kaustophilus (strain HTA426) protein is Ribonuclease HIII.